The chain runs to 957 residues: Dystrophin-related protein 2 (957 aa).

Spectrin repeat units lie at residues Asp102–Glu179 and Glu231–Asp337. The 26-residue stretch at Trp358 to Pro383 folds into the WW domain. The segment at Lys605–Thr661 adopts a ZZ-type; degenerate zinc-finger fold. Residues Cys610, Cys613, Cys634, and Cys637 each coordinate Zn(2+). Phosphoserine is present on Ser748. Residues Pro877 to Ser894 are compositionally biased toward low complexity. Residues Pro877 to Ser923 form a disordered region. Phosphothreonine is present on Thr910.

As to quaternary structure, interacts with PRX; this enhances phosphorylation. Identified in a dystroglycan complex that contains at least PRX, DRP2, UTRN, DMD and DAG1. Detected in trigeminal nerve Schwann cells. Detected in brain cortex and hippocampus. Detected in brain membrane fractions and highly enriched in the postsynaptic density (at protein level).

The protein resides in the postsynaptic density. It is found in the cell projection. The protein localises to the dendrite. Its subcellular location is the perikaryon. It localises to the cell membrane. Functionally, required for normal myelination and for normal organization of the cytoplasm and the formation of Cajal bands in myelinating Schwann cells. Required for normal PRX location at appositions between the abaxonal surface of the myelin sheath and the Schwann cell plasma membrane. Possibly involved in membrane-cytoskeleton interactions of the central nervous system. This chain is Dystrophin-related protein 2 (Drp2), found in Rattus norvegicus (Rat).